We begin with the raw amino-acid sequence, 427 residues long: Glutamate-1-semialdehyde 2,1-aminomutase (427 aa).

N6-(pyridoxal phosphate)lysine is present on lysine 265.

It belongs to the class-III pyridoxal-phosphate-dependent aminotransferase family. HemL subfamily. Homodimer. It depends on pyridoxal 5'-phosphate as a cofactor.

It localises to the cytoplasm. The enzyme catalyses (S)-4-amino-5-oxopentanoate = 5-aminolevulinate. The protein operates within porphyrin-containing compound metabolism; protoporphyrin-IX biosynthesis; 5-aminolevulinate from L-glutamyl-tRNA(Glu): step 2/2. The chain is Glutamate-1-semialdehyde 2,1-aminomutase from Burkholderia mallei (strain NCTC 10229).